The chain runs to 912 residues: Alpha-actinin-4 (912 aa).

An actin-binding region spans residues 1–267 (MVDYHAANQA…IMTYVSSFYH (267 aa)). The segment at 12 to 27 (QYGPNSGGGNGAGGGG) is interaction with VCL. Positions 12–31 (QYGPNSGGGNGAGGGGSMGD) are disordered. The span at 16–29 (NSGGGNGAGGGGSM) shows a compositional bias: gly residues. The residue at position 32 (tyrosine 32) is a Phosphotyrosine. Positions 41 to 62 (RDLLLDPAWEKQQRKTFTAWCN) are interaction with VCL. Calponin-homology (CH) domains are found at residues 51–155 (KQQR…LRFA) and 164–270 (TSAK…HAFS). Positions 85 to 89 (LMLLL) match the LXXLL motif motif. The segment at 109-127 (KINNVNKALDFIASKGVKL) is interaction with VCL. N6-acetyllysine is present on lysine 115. A polyphosphoinositide (PIP2)-binding region spans residues 178–193 (TAPYKNVNVQNFHISW). At lysine 215 the chain carries N6-acetyllysine. Residue threonine 250 is modified to Phosphothreonine. Spectrin repeat units follow at residues 294–404 (HLME…WLLN), 414–519 (HLAE…ALEK), 529–640 (QLHL…ALLE), and 650–753 (HLRR…EVEN). 2 positions are modified to N6-acetyllysine: lysine 593 and lysine 626. Serine 697 is subject to Phosphoserine. The segment at 737–912 (WEQLLTTIAR…STALYGESDL (176 aa)) is mediates interaction with MICALL2. 2 EF-hand domains span residues 766 to 801 (EQMQEFRASFNHFDKDHGGALGPEEFKACLISLGYD) and 807 to 842 (QGDAEFNRIMSVVDPNHSGLVTFQAFIDFMSRETTD). Position 779 (aspartate 779) interacts with Ca(2+). The residue at position 780 (lysine 780) is an N6-acetyllysine. Residues aspartate 781 and glutamate 790 each coordinate Ca(2+). Residue lysine 860 is modified to N6-acetyllysine. At serine 910 the chain carries Phosphoserine.

The protein belongs to the alpha-actinin family. As to quaternary structure, homodimer; antiparallel. Interacts with MAGI1. Interacts with PDLIM2. Identified in a complex with CASK, IQGAP1, MAGI2, NPHS1, SPTAN1 and SPTBN1. Identified in a IGF2BP1-dependent mRNP granule complex containing untranslated mRNAs. Component of the CART complex, at least composed of ACTN4, HGS/HRS, MYO5B and TRIM3. Binds TRIM3 at the N-terminus. Interacts with MICALL2 (preferentially in opened conformation); stimulated by RAB13 activation. Interacts with PPARG and RARA. Binds to VCL; this interaction triggers VCL conformational changes. Interacts with SEPTIN14. Interacts with IGSF8.

The protein resides in the nucleus. It is found in the cytoplasm. Its subcellular location is the cell junction. It localises to the cytoskeleton. The protein localises to the stress fiber. The protein resides in the perinuclear region. Functionally, F-actin cross-linking protein which is thought to anchor actin to a variety of intracellular structures. This is a bundling protein. Probably involved in vesicular trafficking via its association with the CART complex. The CART complex is necessary for efficient transferrin receptor recycling but not for EGFR degradation. Involved in tight junction assembly in epithelial cells probably through interaction with MICALL2. Links MICALL2 to the actin cytoskeleton and recruits it to the tight junctions. May also function as a transcriptional coactivator, stimulating transcription mediated by the nuclear hormone receptors PPARG and RARA. Association with IGSF8 regulates the immune synapse formation and is required for efficient T-cell activation. The polypeptide is Alpha-actinin-4 (Mus musculus (Mouse)).